Here is a 677-residue protein sequence, read N- to C-terminus: Transketolase (677 aa).

Residue His-27 participates in substrate binding. Residues His-66 and 114 to 116 (GPL) each bind thiamine diphosphate. A Mg(2+)-binding site is contributed by Asp-155. Residues Gly-156 and Asn-185 each contribute to the thiamine diphosphate site. Mg(2+) contacts are provided by Asn-185 and Ile-187. Substrate-binding residues include His-261, Arg-356, and Ser-383. Residue His-261 coordinates thiamine diphosphate. Glu-415 and Phe-442 together coordinate thiamine diphosphate. Residue Glu-415 is the Proton donor of the active site. His-466, Asp-474, and Arg-525 together coordinate substrate.

Belongs to the transketolase family. Homodimer. The cofactor is Mg(2+). Ca(2+) serves as cofactor. It depends on Mn(2+) as a cofactor. Requires Co(2+) as cofactor. Thiamine diphosphate is required as a cofactor.

The enzyme catalyses D-sedoheptulose 7-phosphate + D-glyceraldehyde 3-phosphate = aldehydo-D-ribose 5-phosphate + D-xylulose 5-phosphate. Functionally, catalyzes the transfer of a two-carbon ketol group from a ketose donor to an aldose acceptor, via a covalent intermediate with the cofactor thiamine pyrophosphate. The polypeptide is Transketolase (TKT) (Scheffersomyces stipitis (strain ATCC 58785 / CBS 6054 / NBRC 10063 / NRRL Y-11545) (Yeast)).